The sequence spans 98 residues: NADH-ubiquinone oxidoreductase chain 4L (98 aa).

3 consecutive transmembrane segments (helical) span residues 2-22, 29-49, and 61-81; these read SLVY…LLMF, SLLC…ILIL, and IIML…LVMV.

Belongs to the complex I subunit 4L family. Core subunit of respiratory chain NADH dehydrogenase (Complex I) which is composed of 45 different subunits.

Its subcellular location is the mitochondrion inner membrane. It catalyses the reaction a ubiquinone + NADH + 5 H(+)(in) = a ubiquinol + NAD(+) + 4 H(+)(out). Functionally, core subunit of the mitochondrial membrane respiratory chain NADH dehydrogenase (Complex I) which catalyzes electron transfer from NADH through the respiratory chain, using ubiquinone as an electron acceptor. Part of the enzyme membrane arm which is embedded in the lipid bilayer and involved in proton translocation. The sequence is that of NADH-ubiquinone oxidoreductase chain 4L (MT-ND4L) from Galemys pyrenaicus (Iberian desman).